A 340-amino-acid polypeptide reads, in one-letter code: Phosphatidylglycerol--prolipoprotein diacylglyceryl transferase (340 aa).

A run of 4 helical transmembrane segments spans residues 19 to 39 (IPLR…VWLG), 54 to 74 (ADIA…YHVI), 93 to 113 (IWEG…GAWI), and 119 to 139 (GIPL…AQAF). A 1,2-diacyl-sn-glycero-3-phospho-(1'-sn-glycerol) is bound at residue arginine 141. 3 helical membrane-spanning segments follow: residues 176-196 (HPTF…VIWA), 202-221 (LGHG…GRAW), and 238-258 (LNDW…VLSS). A disordered region spans residues 266-340 (EIVEPGASDT…ESAAESAKKV (75 aa)). The segment covering 284-294 (DLGKDEDKATT) has biased composition (basic and acidic residues). Positions 295-307 (DKATATDTSTTTD) are enriched in low complexity. Residues 326-340 (PSEKTESAAESAKKV) show a composition bias toward basic and acidic residues.

It belongs to the Lgt family.

Its subcellular location is the cell membrane. It catalyses the reaction L-cysteinyl-[prolipoprotein] + a 1,2-diacyl-sn-glycero-3-phospho-(1'-sn-glycerol) = an S-1,2-diacyl-sn-glyceryl-L-cysteinyl-[prolipoprotein] + sn-glycerol 1-phosphate + H(+). It participates in protein modification; lipoprotein biosynthesis (diacylglyceryl transfer). Its function is as follows. Catalyzes the transfer of the diacylglyceryl group from phosphatidylglycerol to the sulfhydryl group of the N-terminal cysteine of a prolipoprotein, the first step in the formation of mature lipoproteins. The sequence is that of Phosphatidylglycerol--prolipoprotein diacylglyceryl transferase from Streptomyces avermitilis (strain ATCC 31267 / DSM 46492 / JCM 5070 / NBRC 14893 / NCIMB 12804 / NRRL 8165 / MA-4680).